The primary structure comprises 142 residues: Large ribosomal subunit protein uL13 (142 aa).

This sequence belongs to the universal ribosomal protein uL13 family. As to quaternary structure, part of the 50S ribosomal subunit.

Functionally, this protein is one of the early assembly proteins of the 50S ribosomal subunit, although it is not seen to bind rRNA by itself. It is important during the early stages of 50S assembly. The sequence is that of Large ribosomal subunit protein uL13 from Vesicomyosocius okutanii subsp. Calyptogena okutanii (strain HA).